Consider the following 454-residue polypeptide: Tyrosine aminotransferase (454 aa).

N-acetylmethionine is present on Met1. An N6-(pyridoxal phosphate)lysine modification is found at Lys280. Ser448 bears the Phosphoserine mark.

This sequence belongs to the class-I pyridoxal-phosphate-dependent aminotransferase family. In terms of assembly, homodimer. Pyridoxal 5'-phosphate serves as cofactor.

It catalyses the reaction L-tyrosine + 2-oxoglutarate = 3-(4-hydroxyphenyl)pyruvate + L-glutamate. Its pathway is amino-acid degradation; L-phenylalanine degradation; acetoacetate and fumarate from L-phenylalanine: step 2/6. In terms of biological role, transaminase involved in tyrosine breakdown. Converts tyrosine to p-hydroxyphenylpyruvate. Can catalyze the reverse reaction, using glutamic acid, with 2-oxoglutarate as cosubstrate (in vitro). Has much lower affinity and transaminase activity towards phenylalanine. In Homo sapiens (Human), this protein is Tyrosine aminotransferase (TAT).